The following is a 304-amino-acid chain: GTP cyclohydrolase FolE2 (304 aa).

The protein belongs to the GTP cyclohydrolase IV family.

The enzyme catalyses GTP + H2O = 7,8-dihydroneopterin 3'-triphosphate + formate + H(+). The protein operates within cofactor biosynthesis; 7,8-dihydroneopterin triphosphate biosynthesis; 7,8-dihydroneopterin triphosphate from GTP: step 1/1. Functionally, converts GTP to 7,8-dihydroneopterin triphosphate. This Bdellovibrio bacteriovorus (strain ATCC 15356 / DSM 50701 / NCIMB 9529 / HD100) protein is GTP cyclohydrolase FolE2.